The sequence spans 158 residues: uncharacterized protein (158 aa).

Over residues 1–21 (MPHTGSQHTLQATPKTAQHTG) the composition is skewed to polar residues. 2 disordered regions span residues 1 to 89 (MPHT…RVEG) and 107 to 158 (EEEK…DAKT). Basic and acidic residues-rich tracts occupy residues 51-68 (HTEG…DKAG) and 107-127 (EEEK…RESR). A compositionally biased stretch (polar residues) spans 128–137 (QGTAHKSTCM). Positions 149-158 (EIGKVEDAKT) are enriched in basic and acidic residues.

This is an uncharacterized protein from Encephalitozoon cuniculi (strain GB-M1) (Microsporidian parasite).